We begin with the raw amino-acid sequence, 292 residues long: Alpha-soluble NSF attachment protein (292 aa).

Ser-2 carries the post-translational modification N-acetylserine. Lys-261 is covalently cross-linked (Glycyl lysine isopeptide (Lys-Gly) (interchain with G-Cter in ubiquitin)).

It belongs to the SNAP family. As to quaternary structure, binds to vacuolar cis-SNARE complexes composed of the v-SNAREs NYV1, VTI1 and YKT6, and the t-SNAREs VAM3 and VAM7. Interacts with SEC18.

The protein resides in the membrane. Functionally, SNARE complex protein that binds to cis-SNARE complexes on membranes and is required for vesicular transport between the endoplasmic reticulum and the Golgi apparatus and for homotypic vacuole fusion. During the priming step of membrane fusion, is released from cis-SNARE complexes by SEC18 to establish a pool of unpaired SNAREs, which are required for interactions in trans during docking and fusion steps. Can displace HOPS from SNARE complexes, which may be a prerequisite for trans-SNARE complex disassembly and subsequent rounds of priming, docking and fusion. This chain is Alpha-soluble NSF attachment protein (SEC17), found in Saccharomyces cerevisiae (strain ATCC 204508 / S288c) (Baker's yeast).